The primary structure comprises 255 residues: Diphthine synthase (255 aa).

Residues Leu9, Asp85, Val88, 113–114 (SI), Leu164, Ala207, and His232 each bind S-adenosyl-L-methionine.

This sequence belongs to the diphthine synthase family. As to quaternary structure, homodimer.

It catalyses the reaction 2-[(3S)-amino-3-carboxypropyl]-L-histidyl-[translation elongation factor 2] + 3 S-adenosyl-L-methionine = diphthine-[translation elongation factor 2] + 3 S-adenosyl-L-homocysteine + 3 H(+). The protein operates within protein modification; peptidyl-diphthamide biosynthesis. Functionally, S-adenosyl-L-methionine-dependent methyltransferase that catalyzes the trimethylation of the amino group of the modified target histidine residue in translation elongation factor 2 (EF-2), to form an intermediate called diphthine. The three successive methylation reactions represent the second step of diphthamide biosynthesis. The polypeptide is Diphthine synthase (Methanococcus maripaludis (strain DSM 14266 / JCM 13030 / NBRC 101832 / S2 / LL)).